The sequence spans 161 residues: Endoribonuclease YbeY (161 aa).

3 residues coordinate Zn(2+): His121, His125, and His131.

This sequence belongs to the endoribonuclease YbeY family. Zn(2+) is required as a cofactor.

The protein resides in the cytoplasm. Single strand-specific metallo-endoribonuclease involved in late-stage 70S ribosome quality control and in maturation of the 3' terminus of the 16S rRNA. This chain is Endoribonuclease YbeY, found in Bordetella avium (strain 197N).